A 111-amino-acid chain; its full sequence is SPbeta prophage-derived uncharacterized protein YolC (111 aa).

Positions 1–25 (MKKRLIGFLVLVPALIMSGITLIEA) are cleaved as a signal peptide.

This Bacillus subtilis (strain 168) protein is SPbeta prophage-derived uncharacterized protein YolC (yolC).